A 363-amino-acid chain; its full sequence is Outer membrane protein P2 (363 aa).

A signal peptide spans 1–20; sequence MKKTLAALIVGAFAASAANA.

Belongs to the Gram-negative porin family. Homotrimer.

Its subcellular location is the cell outer membrane. In terms of biological role, forms pores that allow passive diffusion of small molecules across the outer membrane. This is Outer membrane protein P2 (ompP2) from Haemophilus influenzae.